The sequence spans 209 residues: 3-hexulose-6-phosphate synthase (209 aa).

The protein belongs to the HPS/KGPDC family. HPS subfamily. Homodimer.

It carries out the reaction D-ribulose 5-phosphate + formaldehyde = D-arabino-hex-3-ulose 6-phosphate. It participates in one-carbon metabolism; formaldehyde assimilation via RuMP pathway; D-fructose 6-phosphate from D-ribulose 5-phosphate and formaldehyde: step 1/2. Functionally, catalyzes the condensation of ribulose 5-phosphate with formaldehyde to form 3-hexulose 6-phosphate. This is 3-hexulose-6-phosphate synthase (rmpA) from Methylomonas aminofaciens.